A 1105-amino-acid chain; its full sequence is Serine/threonine-protein kinase 4 homolog B (1105 aa).

Residues 23–274 (FDLIECLGRG…AKDLLKHSFF (252 aa)) form the Protein kinase domain. ATP is bound by residues 29–37 (LGRGSFGSV) and Lys-52. Asp-142 acts as the Proton acceptor in catalysis. Disordered regions lie at residues 348 to 396 (STQI…TKNN), 411 to 482 (SSSA…RQPA), and 495 to 541 (PSFG…SLPL). 2 stretches are compositionally biased toward low complexity: residues 358-396 (QAQQ…TKNN) and 411-437 (SSSA…TTTN). The span at 438–458 (DYHTGNGRTSSSSPQFGLQHQ) shows a compositional bias: polar residues. 2 stretches are compositionally biased toward low complexity: residues 459 to 473 (NSSN…TVPS) and 513 to 541 (PIGS…SLPL). A calpain-like cysteine protease-like region spans residues 516–1105 (SPITKRPTPT…SEFDLDFYNN (590 aa)). Domain III stretches follow at residues 641-668 (EVSA…EGSF), 791-830 (VHTQ…QGSI), 836-972 (SEQI…NVIQ), and 1076-1103 (VVIP…LDFY).

This sequence in the N-terminal section; belongs to the protein kinase superfamily. STE Ser/Thr protein kinase family. STE20 subfamily. In the C-terminal section; belongs to the peptidase C2 family. It depends on Mn(2+) as a cofactor.

It catalyses the reaction L-seryl-[protein] + ATP = O-phospho-L-seryl-[protein] + ADP + H(+). The catalysed reaction is L-threonyl-[protein] + ATP = O-phospho-L-threonyl-[protein] + ADP + H(+). Probable serine/threonine-protein kinase. The sequence is that of Serine/threonine-protein kinase 4 homolog B (krsB) from Dictyostelium discoideum (Social amoeba).